A 132-amino-acid chain; its full sequence is Translation initiation factor 5A (132 aa).

A Hypusine modification is found at K36.

It belongs to the eIF-5A family.

Its subcellular location is the cytoplasm. In terms of biological role, functions by promoting the formation of the first peptide bond. The protein is Translation initiation factor 5A (eIF5A) of Pyrobaculum arsenaticum (strain DSM 13514 / JCM 11321 / PZ6).